A 315-amino-acid chain; its full sequence is MENVYDIAIIGSGPAGLAAALYGARAKMKTLLLEGMKVGGQIVITHEVANYPGSVPEATGPSLIGRMEEQVEEFGAERVMDNIVDVDFTDKIKVLKGAKGEYKAKAVIVATGASPKLAGCPGEKELTGKGVSYCATCDADFFEDMEVFVIGGGDTAVEEAMFLTKFARKVTIVHRRAELRAAKSIQEKAFKNEKLNFMWNTVIEEIKGDGIVESAVFKNRETGEVTEFVAPEEDGTFGIFVFIGYDPKSALVEGKLELDETGYIPTDDNMKTNVEGVFAAGDIRVKSLRQVVTATADGAIAAVQAEKYIEELFAE.

FAD is bound at residue 34 to 41 (EGMKVGGQ). The cysteines at positions 134 and 137 are disulfide-linked. Residue 282–291 (DIRVKSLRQV) participates in FAD binding.

Belongs to the class-II pyridine nucleotide-disulfide oxidoreductase family. Homodimer. FAD serves as cofactor.

It is found in the cytoplasm. The enzyme catalyses [thioredoxin]-dithiol + NADP(+) = [thioredoxin]-disulfide + NADPH + H(+). The protein is Thioredoxin reductase (trxB) of Peptoclostridium litorale (Clostridium litorale).